We begin with the raw amino-acid sequence, 334 residues long: Protein-methionine-sulfoxide reductase catalytic subunit MsrP (334 aa).

Residues M1 to A44 constitute a signal peptide (tat-type signal). Mo-molybdopterin is bound by residues N88, Y91–E92, C146, T181, N233, R238, and G249–K251.

Belongs to the MsrP family. In terms of assembly, heterodimer of a catalytic subunit (MsrP) and a heme-binding subunit (MsrQ). The cofactor is Mo-molybdopterin. Predicted to be exported by the Tat system. The position of the signal peptide cleavage has not been experimentally proven.

Its subcellular location is the periplasm. It catalyses the reaction L-methionyl-[protein] + a quinone + H2O = L-methionyl-(S)-S-oxide-[protein] + a quinol. It carries out the reaction L-methionyl-[protein] + a quinone + H2O = L-methionyl-(R)-S-oxide-[protein] + a quinol. Functionally, part of the MsrPQ system that repairs oxidized periplasmic proteins containing methionine sulfoxide residues (Met-O), using respiratory chain electrons. Thus protects these proteins from oxidative-stress damage caused by reactive species of oxygen and chlorine generated by the host defense mechanisms. MsrPQ is essential for the maintenance of envelope integrity under bleach stress, rescuing a wide series of structurally unrelated periplasmic proteins from methionine oxidation, including the primary periplasmic chaperone SurA and the lipoprotein Pal. The catalytic subunit MsrP is non-stereospecific, being able to reduce both (R-) and (S-) diastereoisomers of methionine sulfoxide. The chain is Protein-methionine-sulfoxide reductase catalytic subunit MsrP from Escherichia coli O81 (strain ED1a).